Consider the following 258-residue polypeptide: Aquaporin PIP1-2 (258 aa).

Residues 1 to 37 (MEGKEEDVRLGANKFTERQPIGTAAQSQDKDYKEPPP) form a disordered region. The Cytoplasmic portion of the chain corresponds to 1 to 55 (MEGKEEDVRLGANKFTERQPIGTAAQSQDKDYKEPPPAPLFEPGELSSWSFYRAG). Residues 56–76 (IAEFVATFLFLYITILTVMGV) form a helical membrane-spanning segment. Over 77 to 89 (VKSSTKCSTVGIQ) the chain is Extracellular. The helical transmembrane segment at 90–110 (GIAWAFGGMIFALVYCTAGIS) threads the bilayer. The Cytoplasmic segment spans residues 111–133 (GGHINPAVTFGLFLARKLSLTRA). The short motif at 115–117 (NPA) is the NPA 1 element. Residues 134 to 154 (LFYMVMQCLGAICGAGVVKGF) traverse the membrane as a helical segment. Over 155-175 (QKGLYENNGGGANVVAPGYTK) the chain is Extracellular. Residues 176-196 (GDGLGAEIVGTFILVYTVFSA) form a helical membrane-spanning segment. Residues 197-209 (TDAKRSARDSHVP) lie on the Cytoplasmic side of the membrane. Residues 210–230 (ILAPLPIGFAVFLVHLATIPI) form a helical membrane-spanning segment. The Extracellular segment spans residues 231–258 (TGTGINPARSLGAAIIYNKGHAWDDHWI). Positions 236–238 (NPA) match the NPA 2 motif.

It belongs to the MIP/aquaporin (TC 1.A.8) family. PIP (TC 1.A.8.11) subfamily. As to expression, barely detectable in roots, leaves and fruits.

It localises to the cell membrane. Water channel required to facilitate the transport of water across cell membrane; mercury-insensitive. Contributes to the tolerance to multiple abiotic stresses including salt (NaCl), cold and water deprivation, by modulating cytosolic K(+)/Na(+) ratio, maintaining osmotic balance, and reducing membrane injury (e.g. oxidative injury). In Musa acuminata (Banana), this protein is Aquaporin PIP1-2.